Consider the following 163-residue polypeptide: GPI-anchored protein LLG2 (163 aa).

The N-terminal stretch at 1 to 23 is a signal peptide; sequence MEISPYCLLSLLPIFLLSGFSLS. N-linked (GlcNAc...) asparagine glycosylation occurs at N52. S135 carries GPI-anchor amidated serine lipidation. A propeptide spans 136–163 (removed in mature form); the sequence is DSIPRASTTASLAVLSTFLVLCLLFLSS.

Expressed in pollen, pollen tubes, sporophytic pistil tissues, in the early stages of female gametophyte development, and in unfertilized, mature ovules.

It localises to the cell membrane. The sequence is that of GPI-anchored protein LLG2 from Arabidopsis thaliana (Mouse-ear cress).